Here is a 341-residue protein sequence, read N- to C-terminus: S-adenosylmethionine:tRNA ribosyltransferase-isomerase (341 aa).

It belongs to the QueA family. In terms of assembly, monomer.

Its subcellular location is the cytoplasm. It catalyses the reaction 7-aminomethyl-7-carbaguanosine(34) in tRNA + S-adenosyl-L-methionine = epoxyqueuosine(34) in tRNA + adenine + L-methionine + 2 H(+). Its pathway is tRNA modification; tRNA-queuosine biosynthesis. In terms of biological role, transfers and isomerizes the ribose moiety from AdoMet to the 7-aminomethyl group of 7-deazaguanine (preQ1-tRNA) to give epoxyqueuosine (oQ-tRNA). This chain is S-adenosylmethionine:tRNA ribosyltransferase-isomerase, found in Clostridium perfringens (strain ATCC 13124 / DSM 756 / JCM 1290 / NCIMB 6125 / NCTC 8237 / Type A).